Reading from the N-terminus, the 417-residue chain is Tyrosine--tRNA ligase (417 aa).

Position 39 (tyrosine 39) interacts with L-tyrosine. Positions 44–53 (PTASSLHVGH) match the 'HIGH' region motif. Tyrosine 176 and glutamine 180 together coordinate L-tyrosine. The short motif at 236–240 (KMGKS) is the 'KMSKS' region element. Residue lysine 239 participates in ATP binding. The 67-residue stretch at 350–416 (VGVLSLIVRA…GKKKHVLVRP (67 aa)) folds into the S4 RNA-binding domain.

The protein belongs to the class-I aminoacyl-tRNA synthetase family. TyrS type 1 subfamily. As to quaternary structure, homodimer.

The protein localises to the cytoplasm. It carries out the reaction tRNA(Tyr) + L-tyrosine + ATP = L-tyrosyl-tRNA(Tyr) + AMP + diphosphate + H(+). Functionally, catalyzes the attachment of tyrosine to tRNA(Tyr) in a two-step reaction: tyrosine is first activated by ATP to form Tyr-AMP and then transferred to the acceptor end of tRNA(Tyr). This is Tyrosine--tRNA ligase from Agrobacterium fabrum (strain C58 / ATCC 33970) (Agrobacterium tumefaciens (strain C58)).